A 196-amino-acid polypeptide reads, in one-letter code: Imidazoleglycerol-phosphate dehydratase (196 aa).

The protein belongs to the imidazoleglycerol-phosphate dehydratase family.

Its subcellular location is the cytoplasm. It carries out the reaction D-erythro-1-(imidazol-4-yl)glycerol 3-phosphate = 3-(imidazol-4-yl)-2-oxopropyl phosphate + H2O. It participates in amino-acid biosynthesis; L-histidine biosynthesis; L-histidine from 5-phospho-alpha-D-ribose 1-diphosphate: step 6/9. This is Imidazoleglycerol-phosphate dehydratase from Dehalococcoides mccartyi (strain ATCC BAA-2266 / KCTC 15142 / 195) (Dehalococcoides ethenogenes (strain 195)).